We begin with the raw amino-acid sequence, 245 residues long: MVAVSGTQRTRTVSLARWAVYAGSVFAGAWLATQLFYLAQIALWSFVNPGSTAFMRTDAWRLSRDTPPAQIRHQWVPYDQISRNLKRALIASEDSTFATNNGYDVDAILQAWEKNKARGRIVAGGSTITQQLARNLFLSREKSYIRKGQELIITWMLETVLDKERIFEIYLNSVEWGRGVYGAEAAARYYYKIPASRLGAWQSARLAVMLPKPRWFDAHRGSAYQAQRAAVIARRMGAAELPQSE.

The chain crosses the membrane as a helical span at residues 20 to 42 (VYAGSVFAGAWLATQLFYLAQIA).

The protein belongs to the glycosyltransferase 51 family.

The protein resides in the cell inner membrane. It carries out the reaction [GlcNAc-(1-&gt;4)-Mur2Ac(oyl-L-Ala-gamma-D-Glu-L-Lys-D-Ala-D-Ala)](n)-di-trans,octa-cis-undecaprenyl diphosphate + beta-D-GlcNAc-(1-&gt;4)-Mur2Ac(oyl-L-Ala-gamma-D-Glu-L-Lys-D-Ala-D-Ala)-di-trans,octa-cis-undecaprenyl diphosphate = [GlcNAc-(1-&gt;4)-Mur2Ac(oyl-L-Ala-gamma-D-Glu-L-Lys-D-Ala-D-Ala)](n+1)-di-trans,octa-cis-undecaprenyl diphosphate + di-trans,octa-cis-undecaprenyl diphosphate + H(+). It participates in cell wall biogenesis; peptidoglycan biosynthesis. In terms of biological role, peptidoglycan polymerase that catalyzes glycan chain elongation from lipid-linked precursors. In Burkholderia orbicola (strain MC0-3), this protein is Biosynthetic peptidoglycan transglycosylase.